Here is a 155-residue protein sequence, read N- to C-terminus: Small ribosomal subunit protein uS7cz/uS7cy (155 aa).

It belongs to the universal ribosomal protein uS7 family. As to quaternary structure, part of the 30S ribosomal subunit.

It localises to the plastid. Its subcellular location is the chloroplast. One of the primary rRNA binding proteins, it binds directly to 16S rRNA where it nucleates assembly of the head domain of the 30S subunit. In Eucalyptus globulus subsp. globulus (Tasmanian blue gum), this protein is Small ribosomal subunit protein uS7cz/uS7cy (rps7-A).